The sequence spans 263 residues: MSIVTFTLTDPSSALIAEIMQAIERHNVSVPEGLRDISKPTKKKQQSQPQQLSRASARPQQLQPGPSGYQAKKPAKQKAEVVKPKQKQLAPPINKKAAKAKLYGLEQHCPKYAEAKGLQKQIGMTYYKISEPYALPDFKVMEASEDLVAVSEKDPMGSFEKRLYSMGFPKRPIKNVVPVFEFSDHYIVVFFPGSNAEIVKNVPKDSVSDYAEAQLAALLAARQQINQIHELGDILPTNYLNVLDSGTQDVVVSDEEDDSDSAQ.

Residues 30–39 show a composition bias toward basic and acidic residues; sequence VPEGLRDISK. The tract at residues 30 to 93 is disordered; it reads VPEGLRDISK…PKQKQLAPPI (64 aa). Residues 52 to 64 are compositionally biased toward polar residues; that stretch reads LSRASARPQQLQP.

The sequence is that of P29 (p29) from Citrus sinensis (Sweet orange).